The following is a 351-amino-acid chain: Probable minor fimbrial subunit LpfD (351 aa).

A signal peptide spans 1–22 (MKAAIALSLLGCVFGFSGKAFA).

Belongs to the fimbrial protein family.

It is found in the fimbrium. Part of the lpfABCC'DE fimbrial operon. LP fimbriae may participate in the interaction with eukaryotic cells by assisting in microcolony formation. This Escherichia coli O157:H7 protein is Probable minor fimbrial subunit LpfD (lpfD).